Here is a 434-residue protein sequence, read N- to C-terminus: MADNNSPPGSVEQKADQIVEANPLVKDDTSLETIVRRFQDSMSEAKTHKFWETQPVGQFKDIGDTSLPEGPIEPATPLSEVKQEPYNLPSVYEWTTCDMNSDDMCSEVYNLLKNNYVEDDENMFRFNYSKEFLRWALRPPGYYQSWHIGVRAKTSKKLVAFISGVPARIRVRDEVVKMAEINFLCVHKKLRSKRLAPVMIKEVTRRVHLENIWQAAYTAGVILPTPITTCQYWHRSLNPKKLIDVGFSRLGARMTMSRTIKLYKLPDAPITPGFRKMEPRDVPAVTRLLRNYLSQFGVATDFDENDVEHWLLPREDVVDSYLVESPETHDVTDFCSFYTLPSTILGNPNYTTLKAAYSYYNVATQTSFLQLMNDALIVSKQKGFDVFNALDVMHNESFLKELKFGPGDGQLHYYLYNYRLKSALKPAELGLVLL.

The disordered stretch occupies residues 1–24 (MADNNSPPGSVEQKADQIVEANPL). Ala2 carries the N-acetylalanine modification. Residues 48–51 (HKFW), 184–186 (LCV), and 192–196 (SKRLA) contribute to the tetradecanoyl-CoA site. Catalysis depends on Leu434, which acts as the Proton acceptor; via carboxylate.

The protein belongs to the NMT family. Expressed ubiquitously, with higher levels in young tissues (at protein level).

It is found in the cytoplasm. The catalysed reaction is N-terminal glycyl-[protein] + tetradecanoyl-CoA = N-tetradecanoylglycyl-[protein] + CoA + H(+). Functionally, adds a myristoyl group to the N-terminal glycine residue of certain cellular proteins. Can also use decanoyl-CoA and lauroyl-CoA as substrates. The protein is Glycylpeptide N-tetradecanoyltransferase 1 (NMT1) of Arabidopsis thaliana (Mouse-ear cress).